Here is a 417-residue protein sequence, read N- to C-terminus: Tyrosine--tRNA ligase (417 aa).

Position 39 (Y39) interacts with L-tyrosine. A 'HIGH' region motif is present at residues 44–53 (PTAPSLHAGG). The L-tyrosine site is built by Y176 and Q180. A 'KMSKS' region motif is present at residues 236 to 240 (KMGKS). Residue K239 coordinates ATP. Positions 350-417 (IGVLALMVLA…KKRHVLIRPA (68 aa)) constitute an S4 RNA-binding domain.

This sequence belongs to the class-I aminoacyl-tRNA synthetase family. TyrS type 1 subfamily. In terms of assembly, homodimer.

The protein localises to the cytoplasm. The enzyme catalyses tRNA(Tyr) + L-tyrosine + ATP = L-tyrosyl-tRNA(Tyr) + AMP + diphosphate + H(+). Functionally, catalyzes the attachment of tyrosine to tRNA(Tyr) in a two-step reaction: tyrosine is first activated by ATP to form Tyr-AMP and then transferred to the acceptor end of tRNA(Tyr). This chain is Tyrosine--tRNA ligase, found in Brucella abortus (strain 2308).